The primary structure comprises 395 residues: uncharacterized protein (395 aa).

The span at Ser-286–His-306 shows a compositional bias: low complexity. Positions Ser-286 to Val-395 are disordered. The segment covering Arg-350–Pro-362 has biased composition (pro residues). Polar residues predominate over residues Gln-364 to Ser-385.

This is an uncharacterized protein from Caenorhabditis elegans.